The sequence spans 207 residues: Small ribosomal subunit protein uS4c (207 aa).

The interval 22–51 (TQKNCTRDFPPGQHGPKKKGGGNQKTKESQ) is disordered. An S4 RNA-binding domain is found at 97-158 (MRLDTIIFRL…NSQNFVKNLL (62 aa)).

It belongs to the universal ribosomal protein uS4 family. As to quaternary structure, part of the 30S ribosomal subunit. Contacts protein S5. The interaction surface between S4 and S5 is involved in control of translational fidelity.

The protein localises to the plastid. The protein resides in the chloroplast. Its function is as follows. One of the primary rRNA binding proteins, it binds directly to 16S rRNA where it nucleates assembly of the body of the 30S subunit. Functionally, with S5 and S12 plays an important role in translational accuracy. This is Small ribosomal subunit protein uS4c (rps4) from Chlorella vulgaris (Green alga).